The sequence spans 921 residues: Valine--tRNA ligase (921 aa).

Positions 40 to 50 match the 'HIGH' region motif; sequence PNVTGSLHMGH. Residues 522–526 carry the 'KMSKS' region motif; sequence KMSKS. ATP is bound at residue Lys525. A coiled-coil region spans residues 849-921; that stretch reads MADLIDKEAE…LQHKNRIESL (73 aa).

Belongs to the class-I aminoacyl-tRNA synthetase family. ValS type 1 subfamily. As to quaternary structure, monomer.

The protein localises to the cytoplasm. It carries out the reaction tRNA(Val) + L-valine + ATP = L-valyl-tRNA(Val) + AMP + diphosphate. Functionally, catalyzes the attachment of valine to tRNA(Val). As ValRS can inadvertently accommodate and process structurally similar amino acids such as threonine, to avoid such errors, it has a 'posttransfer' editing activity that hydrolyzes mischarged Thr-tRNA(Val) in a tRNA-dependent manner. In Legionella pneumophila (strain Lens), this protein is Valine--tRNA ligase.